The following is a 183-amino-acid chain: MIDTVVARRYANAIFALGKKDGDDALSSRGECLAALGEALAAAPGLDMTLKSPVIGVEEKKAVLDKLLGKLKADQTMRSFCFLLADKERLAFLREISAWYGKLLDEAKGIVRGELVTAVKLSADKKAKLKESLEKKTGTALELTFAVDKDILGGMVLKMGDRVLDASLRAQLGILRETFKRGE.

It belongs to the ATPase delta chain family. F-type ATPases have 2 components, F(1) - the catalytic core - and F(0) - the membrane proton channel. F(1) has five subunits: alpha(3), beta(3), gamma(1), delta(1), epsilon(1). F(0) has three main subunits: a(1), b(2) and c(10-14). The alpha and beta chains form an alternating ring which encloses part of the gamma chain. F(1) is attached to F(0) by a central stalk formed by the gamma and epsilon chains, while a peripheral stalk is formed by the delta and b chains.

Its subcellular location is the cell inner membrane. Its function is as follows. F(1)F(0) ATP synthase produces ATP from ADP in the presence of a proton or sodium gradient. F-type ATPases consist of two structural domains, F(1) containing the extramembraneous catalytic core and F(0) containing the membrane proton channel, linked together by a central stalk and a peripheral stalk. During catalysis, ATP synthesis in the catalytic domain of F(1) is coupled via a rotary mechanism of the central stalk subunits to proton translocation. Functionally, this protein is part of the stalk that links CF(0) to CF(1). It either transmits conformational changes from CF(0) to CF(1) or is implicated in proton conduction. The chain is ATP synthase subunit delta from Desulfovibrio desulfuricans (strain ATCC 27774 / DSM 6949 / MB).